We begin with the raw amino-acid sequence, 138 residues long: MENNRVNHFLFELVSPEKPVFSEQVVSVVLPSASGALTVMANHAPLVASIVLGSMYVLTSSGEKLFAVCGGVANITSSGCSVLVERVVVVQHLSFHDLEQRILRVRATLEGDSNDGISHKIEDFFHQLKVGDAGLTEA.

Belongs to the ATPase epsilon chain family. In terms of assembly, F-type ATPases have 2 components, CF(1) - the catalytic core - and CF(0) - the membrane proton channel. CF(1) has five subunits: alpha(3), beta(3), gamma(1), delta(1), epsilon(1). CF(0) has three main subunits: a, b and c.

It localises to the cell inner membrane. In terms of biological role, produces ATP from ADP in the presence of a proton gradient across the membrane. The chain is ATP synthase epsilon chain from Bartonella henselae (strain ATCC 49882 / DSM 28221 / CCUG 30454 / Houston 1) (Rochalimaea henselae).